A 188-amino-acid chain; its full sequence is Photosystem I assembly protein Ycf4 (188 aa).

A run of 2 helical transmembrane segments spans residues 26–48 (FFWAGISTIGGVGFLLAGLSSYF) and 63–85 (FIPQGVALLFYGVAGSTVAGYLW).

This sequence belongs to the Ycf4 family.

Its subcellular location is the cellular thylakoid membrane. Functionally, seems to be required for the assembly of the photosystem I complex. The chain is Photosystem I assembly protein Ycf4 from Synechocystis sp. (strain ATCC 27184 / PCC 6803 / Kazusa).